Here is a 446-residue protein sequence, read N- to C-terminus: Glycerol-3-phosphate acyltransferase 3 (446 aa).

Transmembrane regions (helical) follow at residues 11–31 (IFII…MFGS), 146–166 (LRVT…LLPL), and 168–188 (ITLA…VGQL). The HXXXXD motif motif lies at 236-241 (HTSPID).

It belongs to the 1-acyl-sn-glycerol-3-phosphate acyltransferase family.

The protein resides in the endoplasmic reticulum membrane. It catalyses the reaction sn-glycerol 3-phosphate + an acyl-CoA = a 1-acyl-sn-glycero-3-phosphate + CoA. The catalysed reaction is a 1-acyl-sn-glycero-3-phosphate + an acyl-CoA = a 1,2-diacyl-sn-glycero-3-phosphate + CoA. The enzyme catalyses dodecanoyl-CoA + sn-glycerol 3-phosphate = 1-dodecanoyl-sn-glycerol 3-phosphate + CoA. It carries out the reaction sn-glycerol 3-phosphate + hexadecanoyl-CoA = 1-hexadecanoyl-sn-glycero-3-phosphate + CoA. It catalyses the reaction sn-glycerol 3-phosphate + (9Z)-octadecenoyl-CoA = 1-(9Z-octadecenoyl)-sn-glycero-3-phosphate + CoA. The catalysed reaction is (9Z,12Z)-octadecadienoyl-CoA + sn-glycerol 3-phosphate = 1-(9Z,12Z)-octadecadienoyl-sn-glycero-3-phosphate + CoA. The enzyme catalyses 1-tetradecanoyl-sn-glycerol 3-phosphate + (9Z)-octadecenoyl-CoA = 1-tetradecanoyl-2-(9Z)-octadecenoyl-sn-glycero-3-phosphate + CoA. It carries out the reaction 1-hexadecanoyl-sn-glycero-3-phosphate + (9Z)-octadecenoyl-CoA = 1-hexadecanoyl-2-(9Z-octadecenoyl)-sn-glycero-3-phosphate + CoA. It catalyses the reaction 1-(9Z-octadecenoyl)-sn-glycero-3-phosphate + (9Z)-octadecenoyl-CoA = 1,2-di-(9Z-octadecenoyl)-sn-glycero-3-phosphate + CoA. The catalysed reaction is 1-(6Z,9Z,12Z-octadecatrienoyl)-sn-glycero-3-phosphate + (9Z)-octadecenoyl-CoA = (6Z,9Z,12Z)-octadecatrienoyl-2-(9Z)-octadecenoyl-sn-glycero-3-phosphate + CoA. The enzyme catalyses 1-(9Z,12Z,15Z)-octadecatrienoyl-sn-glycero-3-phosphate + (9Z)-octadecenoyl-CoA = 1-(9Z,12Z,15Z)-octadecatrienoyl-2-(9Z)-octadecenoyl-sn-glycero-3-phosphate + CoA. It carries out the reaction 1-(9Z-octadecenoyl)-sn-glycero-3-phosphate + tetradecanoyl-CoA = 1-(9Z)-octadecenoyl-2-tetradecanoyl-sn-glycero-3-phosphate + CoA. It catalyses the reaction 1-(9Z-octadecenoyl)-sn-glycero-3-phosphate + hexadecanoyl-CoA = 1-(9Z)-octadecenoyl-2-hexadecanoyl-sn-glycero-3-phosphate + CoA. The catalysed reaction is 1-(9Z-octadecenoyl)-sn-glycero-3-phosphate + octadecanoyl-CoA = 1-(9Z-octadecenoyl)-2-octadecanoyl-sn-glycero-3-phosphate + CoA. The enzyme catalyses 1-(9Z-octadecenoyl)-sn-glycero-3-phosphate + (9Z,12Z)-octadecadienoyl-CoA = 1-(9Z)-octadecenoyl-2-(9Z,12Z)-octadecadienoyl-sn-glycero-3-phosphate + CoA. It carries out the reaction 1-(5Z,8Z,11Z,14Z-eicosatetraenoyl)-sn-glycero-3-phosphate + (9Z)-octadecenoyl-CoA = 1-(5Z,8Z,11Z,14Z)-eicosatetraenoyl-2-(9Z)-octadecenoyl-sn-glycero-3-phosphate + CoA. It participates in glycerolipid metabolism; triacylglycerol biosynthesis. Its pathway is phospholipid metabolism; CDP-diacylglycerol biosynthesis; CDP-diacylglycerol from sn-glycerol 3-phosphate: step 1/3. Converts glycerol-3-phosphate to 1-acyl-sn-glycerol-3-phosphate (lysophosphatidic acid or LPA) by incorporating an acyl moiety at the sn-1 position of the glycerol backbone. Also converts LPA into 1,2-diacyl-sn-glycerol-3-phosphate (phosphatidic acid or PA) by incorporating an acyl moiety at the sn-2 position of the glycerol backbone. Protects cells against lipotoxicity. This Xenopus laevis (African clawed frog) protein is Glycerol-3-phosphate acyltransferase 3.